A 405-amino-acid polypeptide reads, in one-letter code: Protein lin-11 (405 aa).

Glycyl lysine isopeptide (Lys-Gly) (interchain with G-Cter in SUMO) cross-links involve residues lysine 17 and lysine 18. LIM zinc-binding domains follow at residues 68–124 (CAAC…RRYS) and 127–187 (CAGC…TATK). Polar residues predominate over residues 189-205 (STPTSIHRPVSNGSECN). 2 disordered regions span residues 189 to 208 (STPT…NSDV) and 224 to 246 (GEGD…GPRT). Positions 241 to 300 (RRGPRTTIKAKQLETLKNAFAATPKPTRHIREQLAAETGLNMRVIQVWFQNRRSKERRMK) form a DNA-binding region, homeobox.

As to expression, expressed in ADL, AVJL, AIZL, RICL, RIF and AVG neurons.

The protein localises to the nucleus. In terms of biological role, probable transcription factor which is required for asymmetric division of vulval blast cells. Involved in olfactory plasticity probably by regulating the expression of transcription factor mbr-1 in RIF neurons. Plays a role in the chemorepulsive response toward ascaroside pheromones mediated by the ADL sensory neurons, probably by regulating E-box motif 5'-CANNTG-3' containing target genes in the ADL neurons. Plays a role in the differentiation of the ADL sensory neurons. The polypeptide is Protein lin-11 (lin-11) (Caenorhabditis elegans).